The chain runs to 166 residues: Putative 4-hydroxy-4-methyl-2-oxoglutarate aldolase 2 (166 aa).

N-acetylalanine is present on Ala-2. Residues 81–84 (GGNP) and Arg-103 each bind substrate. Asp-104 provides a ligand contact to a divalent metal cation.

The protein belongs to the class II aldolase/RraA-like family. As to quaternary structure, homotrimer. It depends on a divalent metal cation as a cofactor.

The enzyme catalyses 4-hydroxy-4-methyl-2-oxoglutarate = 2 pyruvate. The catalysed reaction is oxaloacetate + H(+) = pyruvate + CO2. In terms of biological role, catalyzes the aldol cleavage of 4-hydroxy-4-methyl-2-oxoglutarate (HMG) into 2 molecules of pyruvate. Also contains a secondary oxaloacetate (OAA) decarboxylase activity due to the common pyruvate enolate transition state formed following C-C bond cleavage in the retro-aldol and decarboxylation reactions. This chain is Putative 4-hydroxy-4-methyl-2-oxoglutarate aldolase 2, found in Arabidopsis thaliana (Mouse-ear cress).